The primary structure comprises 464 residues: Potassium/proton antiporter CemA (464 aa).

Helical transmembrane passes span 36–56 (FSLS…TEIL), 241–261 (ASVS…QIAI), 341–361 (LLLR…LLIF), 389–409 (ILLL…EILV), and 425–445 (TPCF…YWIF).

This sequence belongs to the CemA family.

It localises to the plastid. The protein localises to the chloroplast inner membrane. It carries out the reaction K(+)(in) + H(+)(out) = K(+)(out) + H(+)(in). Functionally, contributes to K(+)/H(+) antiport activity by supporting proton efflux to control proton extrusion and homeostasis in chloroplasts in a light-dependent manner to modulate photosynthesis. Prevents excessive induction of non-photochemical quenching (NPQ) under continuous-light conditions. Indirectly promotes efficient inorganic carbon uptake into chloroplasts. The sequence is that of Potassium/proton antiporter CemA from Adiantum capillus-veneris (Maidenhair fern).